Consider the following 88-residue polypeptide: MSLLDYFRSEKKNSASLAKERLQIIVAHERSQRGTPDYLPQLKQDILDVIRKYVNVSSDAVQVQFDQNEDDLAVLELNVTLPDEEPKI.

Belongs to the MinE family.

Prevents the cell division inhibition by proteins MinC and MinD at internal division sites while permitting inhibition at polar sites. This ensures cell division at the proper site by restricting the formation of a division septum at the midpoint of the long axis of the cell. This Pseudoalteromonas translucida (strain TAC 125) protein is Cell division topological specificity factor.